Here is a 798-residue protein sequence, read N- to C-terminus: Peregrinol diphosphate synthase TPS1, chloroplastic (798 aa).

The N-terminal 25 residues, 1-25 (MASLSTPNINNTTFVNSKTQLPAVK), are a transit peptide targeting the chloroplast. Position 243 (Lys243) interacts with substrate. Mg(2+) contacts are provided by Asp377 and Asp379. A DXDD motif motif is present at residues 377–380 (DLDD). Lys463 serves as a coordination point for substrate.

The protein belongs to the terpene synthase family. It depends on Mg(2+) as a cofactor. In terms of tissue distribution, mostly expressed in trichomes of leaves and fruits.

The protein resides in the plastid. It is found in the chloroplast. It catalyses the reaction peregrinol diphosphate = (2E,6E,10E)-geranylgeranyl diphosphate + H2O. Its pathway is secondary metabolite biosynthesis; terpenoid biosynthesis. Involved in the biosynthesis of labdane-type diterpenoid including cleroda-dienols, and peregrinol lactones and furan derivatives, dopaminergic diterpenoids that can bind to dopamine receptors in the human pituitary gland, have probably ability to lower prolactin levels, and are used to treat menstrual cycle disorders (e.g. premenstrual syndrome and mastodynia). Terpene synthase that produces peregrinol diphosphate from geranylgeranyl diphosphate (GGPP). The protein is Peregrinol diphosphate synthase TPS1, chloroplastic of Vitex agnus-castus (Chaste tree).